Here is a 498-residue protein sequence, read N- to C-terminus: ATP synthase subunit beta, chloroplastic (498 aa).

172 to 179 (GGAGVGKT) is an ATP binding site.

The protein belongs to the ATPase alpha/beta chains family. F-type ATPases have 2 components, CF(1) - the catalytic core - and CF(0) - the membrane proton channel. CF(1) has five subunits: alpha(3), beta(3), gamma(1), delta(1), epsilon(1). CF(0) has four main subunits: a(1), b(1), b'(1) and c(9-12).

It is found in the plastid. Its subcellular location is the chloroplast thylakoid membrane. It carries out the reaction ATP + H2O + 4 H(+)(in) = ADP + phosphate + 5 H(+)(out). Produces ATP from ADP in the presence of a proton gradient across the membrane. The catalytic sites are hosted primarily by the beta subunits. The chain is ATP synthase subunit beta, chloroplastic from Liriodendron tulipifera (Tuliptree).